Reading from the N-terminus, the 240-residue chain is Tetrahydromethanopterin S-methyltransferase subunit A (240 aa).

At 1 to 216 the chain is on the cytoplasmic side; that stretch reads MADKKAPASG…DAALIAKFNS (216 aa). 5-hydroxybenzimidazolylcob(I)amide is bound at residue His85. A helical transmembrane segment spans residues 217 to 234; that stretch reads GYYNGKIQGIAIGLFLSL. The Extracellular portion of the chain corresponds to 235–240; that stretch reads LIFSLL.

Belongs to the MtrA family. The complex is composed of 8 subunits; MtrA, MtrB, MtrC, MtrD, MtrE, MtrF, MtrG and MtrH. 5-hydroxybenzimidazolylcob(I)amide serves as cofactor.

It localises to the cell membrane. It carries out the reaction 5-methyl-5,6,7,8-tetrahydromethanopterin + coenzyme M + 2 Na(+)(in) = 5,6,7,8-tetrahydromethanopterin + methyl-coenzyme M + 2 Na(+)(out). It participates in one-carbon metabolism; methanogenesis from CO(2); methyl-coenzyme M from 5,10-methylene-5,6,7,8-tetrahydromethanopterin: step 2/2. Its function is as follows. Part of a complex that catalyzes the formation of methyl-coenzyme M and tetrahydromethanopterin from coenzyme M and methyl-tetrahydromethanopterin. This is an energy-conserving, sodium-ion translocating step. The sequence is that of Tetrahydromethanopterin S-methyltransferase subunit A from Methanococcus aeolicus (strain ATCC BAA-1280 / DSM 17508 / OCM 812 / Nankai-3).